The sequence spans 86 residues: Putative antitoxin VapB36 (86 aa).

Possibly the antitoxin component of a type II toxin-antitoxin (TA) system. Its cognate toxin is VapC36 (Potential). The protein is Putative antitoxin VapB36 (vapB36) of Mycobacterium tuberculosis (strain CDC 1551 / Oshkosh).